A 333-amino-acid chain; its full sequence is Diacylglycerol acyltransferase/mycolyltransferase Ag85C (333 aa).

An N-terminal signal peptide occupies residues 1 to 44 (MKFLQQMRKLFGLAAKFPARLTIAVIGTALLAGLVGVVGDTAIA). 86 to 87 (LR) lines the substrate pocket. Positions 102 to 112 (FEEYYHSGLSV) are fibronectin-binding. The substrate site is built by Ser-170 and Asn-198. The active-site Nucleophile is Ser-170. Glu-274 is a catalytic residue. Substrate-binding positions include 276 to 279 (LTLS) and 306 to 308 (HSW). The active site involves His-306.

This sequence belongs to the mycobacterial A85 antigen family. Homodimer.

It localises to the secreted. The enzyme catalyses an acyl-CoA + a 1,2-diacyl-sn-glycerol = a triacyl-sn-glycerol + CoA. The catalysed reaction is 2 alpha,alpha'-trehalose 6-mycolate = alpha,alpha'-trehalose 6,6'-bismycolate + alpha,alpha-trehalose. Functionally, the antigen 85 proteins (FbpA, FbpB, FbpC) are responsible for the high affinity of mycobacteria to fibronectin, a large adhesive glycoprotein, which facilitates the attachment of M.tuberculosis to murine alveolar macrophages (AMs). They also help to maintain the integrity of the cell wall by catalyzing the transfer of mycolic acids to cell wall arabinogalactan and through the synthesis of alpha,alpha-trehalose dimycolate (TDM, cord factor). They catalyze the transfer of a mycoloyl residue from one molecule of alpha,alpha-trehalose monomycolate (TMM) to another TMM, leading to the formation of TDM. The protein is Diacylglycerol acyltransferase/mycolyltransferase Ag85C (fbpC) of Mycobacterium leprae (strain TN).